The sequence spans 666 residues: Long chain acyl-CoA synthetase 4 (666 aa).

228 to 239 contributes to the ATP binding site; it reads IMYTSGTTGDPK. The fatty acid-binding stretch occupies residues 495-519; that stretch reads DGWLHTGDVGEWQPDGSMKIIDRKK.

It belongs to the ATP-dependent AMP-binding enzyme family. Mg(2+) serves as cofactor.

The catalysed reaction is a long-chain fatty acid + ATP + CoA = a long-chain fatty acyl-CoA + AMP + diphosphate. Its pathway is lipid metabolism; fatty acid metabolism. Activation of long-chain fatty acids for both synthesis of cellular lipids, and degradation via beta-oxidation. Preferentially uses palmitate, palmitoleate, oleate and linoleate. The polypeptide is Long chain acyl-CoA synthetase 4 (LACS4) (Arabidopsis thaliana (Mouse-ear cress)).